A 185-amino-acid polypeptide reads, in one-letter code: Monooxygenase hypC (185 aa).

Helical transmembrane passes span Thr35–Leu55, Gly75–Tyr95, and Pro106–Ala126. Residue Asn129 is glycosylated (N-linked (GlcNAc...) asparagine). Residues Ala165–Phe185 form a helical membrane-spanning segment.

The protein belongs to the anthrone oxygenase family.

It is found in the membrane. It functions in the pathway mycotoxin biosynthesis. Monooxygenase; part of the fragmented gene cluster that mediates the biosynthesis of dothistromin (DOTH), a polyketide toxin very similar in structure to the aflatoxin precursor, versicolorin B. The first step of the pathway is the conversion of acetate to norsolorinic acid (NOR) and requires the fatty acid synthase subunits hexA and hexB, as well as the polyketide synthase pksA. PksA combines a hexanoyl starter unit and 7 malonyl-CoA extender units to synthesize the precursor NOR. The hexanoyl starter unit is provided to the acyl-carrier protein (ACP) domain by the fungal fatty acid synthase hexA/hexB. The second step is the conversion of NOR to averantin (AVN) and requires the norsolorinic acid ketoreductase nor1, which catalyzes the dehydration of norsolorinic acid to form (1'S)-averantin. The cytochrome P450 monooxygenase avnA then catalyzes the hydroxylation of AVN to 5'hydroxyaverantin (HAVN). The next step is performed by adhA that transforms HAVN to averufin (AVF). Averufin might then be converted to hydroxyversicolorone by cypX and avfA. Hydroxyversicolorone is further converted versiconal hemiacetal acetate (VHA) by moxY. VHA is then the substrate for the versiconal hemiacetal acetate esterase est1 to yield versiconal (VAL). Versicolorin B synthase vbsA then converts VAL to versicolorin B (VERB) by closing the bisfuran ring. Then, the activity of the versicolorin B desaturase verB leads to versicolorin A (VERA). DotB, a predicted chloroperoxidase, may perform epoxidation of the A-ring of VERA. Alternatively, a cytochrome P450, such as cypX or avnA could catalyze this step. It is also possible that another, uncharacterized, cytochrome P450 enzyme is responsible for this step. Opening of the epoxide could potentially be achieved by the epoxide hydrolase epoA. However, epoA seems not to be required for DOTH biosynthesis, but other epoxide hydrolases may have the ability to complement this hydrolysis. Alternatively, opening of the epoxide ring could be achieved non-enzymatically. The next step is the deoxygenation of ring A to yield the 5,8-dihydroxyanthraquinone which is most likely catalyzed by the NADPH dehydrogenase encoded by ver1. The last stages of DOTH biosynthesis are proposed to involve hydroxylation of the bisfuran. OrdB and norB might have oxidative roles here. An alternative possibility is that cytochrome P450 monoogenases such as avnA and cypX might perform these steps in addition to previously proposed steps. In Dothistroma septosporum (strain NZE10 / CBS 128990) (Red band needle blight fungus), this protein is Monooxygenase hypC.